The sequence spans 338 residues: Protein RecA (338 aa).

66-73 (GPESSGKT) lines the ATP pocket.

This sequence belongs to the RecA family.

Its subcellular location is the cytoplasm. In terms of biological role, can catalyze the hydrolysis of ATP in the presence of single-stranded DNA, the ATP-dependent uptake of single-stranded DNA by duplex DNA, and the ATP-dependent hybridization of homologous single-stranded DNAs. It interacts with LexA causing its activation and leading to its autocatalytic cleavage. The chain is Protein RecA from Geobacter sulfurreducens (strain ATCC 51573 / DSM 12127 / PCA).